Consider the following 347-residue polypeptide: Holliday junction branch migration complex subunit RuvB (347 aa).

A large ATPase domain (RuvB-L) region spans residues 4–184; it reads QDRIVDGHAS…FGIVQRLEFY (181 aa). ATP contacts are provided by residues R24, G65, K68, T69, T70, 131-133, R174, Y184, and R221; that span reads EDF. T69 contacts Mg(2+). Positions 185–255 are small ATPAse domain (RuvB-S); it reads SVQDLTHIVK…IADSALNMLN (71 aa). The segment at 258–347 is head domain (RuvB-H); the sequence is HHGFDHMDRR…SQQQDSLPGI (90 aa). 3 residues coordinate DNA: R294, R313, and R318.

This sequence belongs to the RuvB family. In terms of assembly, homohexamer. Forms an RuvA(8)-RuvB(12)-Holliday junction (HJ) complex. HJ DNA is sandwiched between 2 RuvA tetramers; dsDNA enters through RuvA and exits via RuvB. An RuvB hexamer assembles on each DNA strand where it exits the tetramer. Each RuvB hexamer is contacted by two RuvA subunits (via domain III) on 2 adjacent RuvB subunits; this complex drives branch migration. In the full resolvosome a probable DNA-RuvA(4)-RuvB(12)-RuvC(2) complex forms which resolves the HJ.

It is found in the cytoplasm. The enzyme catalyses ATP + H2O = ADP + phosphate + H(+). Its function is as follows. The RuvA-RuvB-RuvC complex processes Holliday junction (HJ) DNA during genetic recombination and DNA repair, while the RuvA-RuvB complex plays an important role in the rescue of blocked DNA replication forks via replication fork reversal (RFR). RuvA specifically binds to HJ cruciform DNA, conferring on it an open structure. The RuvB hexamer acts as an ATP-dependent pump, pulling dsDNA into and through the RuvAB complex. RuvB forms 2 homohexamers on either side of HJ DNA bound by 1 or 2 RuvA tetramers; 4 subunits per hexamer contact DNA at a time. Coordinated motions by a converter formed by DNA-disengaged RuvB subunits stimulates ATP hydrolysis and nucleotide exchange. Immobilization of the converter enables RuvB to convert the ATP-contained energy into a lever motion, pulling 2 nucleotides of DNA out of the RuvA tetramer per ATP hydrolyzed, thus driving DNA branch migration. The RuvB motors rotate together with the DNA substrate, which together with the progressing nucleotide cycle form the mechanistic basis for DNA recombination by continuous HJ branch migration. Branch migration allows RuvC to scan DNA until it finds its consensus sequence, where it cleaves and resolves cruciform DNA. This Teredinibacter turnerae (strain ATCC 39867 / T7901) protein is Holliday junction branch migration complex subunit RuvB.